Reading from the N-terminus, the 391-residue chain is Multidrug resistance protein MdtL (391 aa).

The Cytoplasmic segment spans residues 1–3 (MSR). A helical transmembrane segment spans residues 4-24 (FLICSFALVLLYPAGIDMYLV). The Periplasmic portion of the chain corresponds to 25–37 (GLPRIAADLNASE). Residues 38 to 58 (AQLHIAFSVYLAGMAAAMLFA) form a helical membrane-spanning segment. The Cytoplasmic segment spans residues 59–75 (GKMADRSGRKPVAIPGS). The chain crosses the membrane as a helical span at residues 76-96 (ALFIIASVFCSLAETSTLFLA). Residues 97–98 (GR) lie on the Periplasmic side of the membrane. A helical membrane pass occupies residues 99–119 (FLQGLGAGCCYVVAFAILRDT). The Cytoplasmic portion of the chain corresponds to 120-130 (LDDRRRAKVLS). A helical membrane pass occupies residues 131 to 151 (LLNGITCIIPVLAPVLGHLIM). At 152–157 (LKFPWQ) the chain is on the periplasmic side. The helical transmembrane segment at 158–178 (SLFWAMAMMGIAVLMLSLFIL) threads the bilayer. Residues 179 to 202 (KETRPASPAASDKPRENSESLLNR) lie on the Cytoplasmic side of the membrane. Residues 203–222 (FFLSRVVITTLSVSVILTFV) traverse the membrane as a helical segment. Topologically, residues 223–244 (NTSPVLLMEIMGFERGEYATIM) are periplasmic. A helical membrane pass occupies residues 245–265 (ALTAGVSMTFSFSTPFALGIF). Residues 266-268 (KPR) are Cytoplasmic-facing. A helical membrane pass occupies residues 269 to 289 (TLMITSQVLFLAAGITLAVSP). Residues 290 to 292 (SHA) lie on the Periplasmic side of the membrane. The helical transmembrane segment at 293–313 (VSLFGITLICAGFSVGFGVAM) threads the bilayer. At 314 to 330 (SQALGPFSLRAGVASST) the chain is on the cytoplasmic side. Residues 331–351 (LGIAQVCGSSLWIWLAAVVGI) traverse the membrane as a helical segment. Over 352-355 (GAWN) the chain is Periplasmic. A helical transmembrane segment spans residues 356–376 (MLIGILIACSIVSLLLIMFVA). Over 377–391 (PGRPVAAHEEIHHHA) the chain is Cytoplasmic.

It belongs to the major facilitator superfamily. DHA1 family. MdtL (TC 2.A.1.2.22) subfamily.

The protein resides in the cell inner membrane. The sequence is that of Multidrug resistance protein MdtL from Shigella flexneri serotype 5b (strain 8401).